A 309-amino-acid chain; its full sequence is tRNA pseudouridine synthase B (309 aa).

The Nucleophile role is filled by Asp-39.

This sequence belongs to the pseudouridine synthase TruB family. Type 1 subfamily.

It catalyses the reaction uridine(55) in tRNA = pseudouridine(55) in tRNA. Responsible for synthesis of pseudouridine from uracil-55 in the psi GC loop of transfer RNAs. This chain is tRNA pseudouridine synthase B, found in Bacillus velezensis (strain DSM 23117 / BGSC 10A6 / LMG 26770 / FZB42) (Bacillus amyloliquefaciens subsp. plantarum).